Here is a 562-residue protein sequence, read N- to C-terminus: Membrane protein insertase YidC (562 aa).

The chain crosses the membrane as a helical span at residues 4-24 (QRIFLFLALSILGLLLWTSWE). The segment at 33-71 (TEEVVEAEDDVPAPAETPDEAPDPADGETPARDRAEVED) is disordered. Over residues 35 to 58 (EVVEAEDDVPAPAETPDEAPDPAD) the composition is skewed to acidic residues. Residues 61–71 (TPARDRAEVED) are compositionally biased toward basic and acidic residues. 4 consecutive transmembrane segments (helical) span residues 330–350 (MTLS…FWLL), 356–376 (IVGN…LAFY), 426–446 (LGGC…YWVL), and 499–519 (IMMA…AGLV).

It belongs to the OXA1/ALB3/YidC family. Type 1 subfamily. In terms of assembly, interacts with the Sec translocase complex via SecD. Specifically interacts with transmembrane segments of nascent integral membrane proteins during membrane integration.

It is found in the cell inner membrane. Functionally, required for the insertion and/or proper folding and/or complex formation of integral membrane proteins into the membrane. Involved in integration of membrane proteins that insert both dependently and independently of the Sec translocase complex, as well as at least some lipoproteins. Aids folding of multispanning membrane proteins. The chain is Membrane protein insertase YidC from Alkalilimnicola ehrlichii (strain ATCC BAA-1101 / DSM 17681 / MLHE-1).